We begin with the raw amino-acid sequence, 529 residues long: GTPase Obg (529 aa).

An Obg domain is found at 2–159 (PTFVDRVVLH…LDAVLELKTV (158 aa)). The disordered stretch occupies residues 62–86 (FHPHQRASRGRPGQGSNRHGADGAD). The OBG-type G domain occupies 160-332 (ADVALVGFPS…LSLALADLVA (173 aa)). Residues 166 to 173 (GFPSAGKS), 191 to 195 (FTTLV), 213 to 216 (DVPG), 284 to 287 (NKID), and 313 to 315 (STA) each bind GTP. Positions 173 and 193 each coordinate Mg(2+). The OCT domain occupies 350-427 (PRAVNEPDFT…IGEVTFDWEP (78 aa)). Disordered regions lie at residues 434 to 494 (LGNG…DRLR) and 506 to 529 (ARRA…EEEG). Composition is skewed to low complexity over residues 461–472 (AGTAASGAAPSP) and 508–520 (RAAA…VRGE).

Belongs to the TRAFAC class OBG-HflX-like GTPase superfamily. OBG GTPase family. Monomer. Mg(2+) is required as a cofactor.

The protein resides in the cytoplasm. An essential GTPase which binds GTP, GDP and possibly (p)ppGpp with moderate affinity, with high nucleotide exchange rates and a fairly low GTP hydrolysis rate. Plays a role in control of the cell cycle, stress response, ribosome biogenesis and in those bacteria that undergo differentiation, in morphogenesis control. This Frankia casuarinae (strain DSM 45818 / CECT 9043 / HFP020203 / CcI3) protein is GTPase Obg.